A 685-amino-acid chain; its full sequence is MAEWLLSASWQRRAKAMTAAAGSAGRAAVPLLLCALLAPGGAYVLDDSDGLGREFDGIGAVSGGGATSRLLVNYPEPYRSQILDYLFKPNFGASLHILKVEIGGDGQTTDGTEPSHMHYALDENYFRGYEWWLMKEAKKRNPNITLIGLPWSFPGWLGKGFDWPYVNLQLTAYYVVTWIVGAKRYHDLDIDYIGIWNERSYNANYIKILRKMLNYQGLQRVKIIASDNLWESISASMLLDAELFKVVDVIGAHYPGTHSAKDAKLTGKKLWSSEDFSTLNSDMGAGCWGRILNQNYINGYMTSTIAWNLVASYYEQLPYGRCGLMTAQEPWSGHYVVESPVWVSAHTTQFTQPGWYYLKTVGHLEKGGSYVALTDGLGNLTIIIETMSHKHSKCIRPFLPYFNVSQQFATFVLKGSFSEIPELQVWYTKLGKTSERFLFKQLDSLWLLDSDGSFTLSLHEDELFTLTTLTTGRKGSYPLPPKSQPFPSTYKDDFNVDYPFFSEAPNFADQTGVFEYFTNIEDPGEHHFTLRQVLNQRPITWAADASNTISIIGDYNWTNLTIKCDVYIETPDTGGVFIAGRVNKGGILIRSARGIFFWIFANGSYRVTGDLAGWIIYALGRVEVTAKKWYTLTLTIKGHFTSGMLNDKSLWTDIPVNFPKNGWAAIGTHSFEFAQFDNFLVEATR.

An N-terminal signal peptide occupies residues 1–42; that stretch reads MAEWLLSASWQRRAKAMTAAAGSAGRAAVPLLLCALLAPGGA. A substrate-binding site is contributed by Thr109. An N-linked (GlcNAc...) asparagine glycan is attached at Asn143. Substrate-binding residues include Trp151 and Asn197. The Proton donor/acceptor role is filled by Glu198. Residue Glu274 is the Nucleophile of the active site. Cys287 and Cys394 are joined by a disulfide. A glycan (N-linked (GlcNAc...) asparagine) is linked at Asn379. Arg396 is a substrate binding site. Residues Asn403, Asn556, Asn559, and Asn602 are each glycosylated (N-linked (GlcNAc...) asparagine).

Belongs to the glycosyl hydrolase 59 family. As to expression, detected in urine. Detected in testis, brain and placenta (at protein level). Detected in kidney and liver.

It is found in the lysosome. The catalysed reaction is a beta-D-galactosyl-(1&lt;-&gt;1')-N-acylsphing-4-enine + H2O = an N-acylsphing-4-enine + D-galactose. It carries out the reaction beta-D-galactosyl-(1&lt;-&gt;1)-sphing-4-enine + H2O = sphing-4-enine + D-galactose. It catalyses the reaction a D-galactosylceramide + H2O = an N-acyl-sphingoid base + D-galactose. In terms of biological role, hydrolyzes the galactose ester bonds of glycolipids such as galactosylceramide and galactosylsphingosine. Enzyme with very low activity responsible for the lysosomal catabolism of galactosylceramide, a major lipid in myelin, kidney and epithelial cells of small intestine and colon. The polypeptide is Galactocerebrosidase (Homo sapiens (Human)).